Here is a 626-residue protein sequence, read N- to C-terminus: Chaperone protein HtpG (626 aa).

Positions Met-1–Arg-341 are a; substrate-binding. The segment at Glu-342–Lys-552 is b. The interval Ile-553–Ile-626 is c.

Belongs to the heat shock protein 90 family. As to quaternary structure, homodimer.

The protein resides in the cytoplasm. Functionally, molecular chaperone. Has ATPase activity. This Alkaliphilus oremlandii (strain OhILAs) (Clostridium oremlandii (strain OhILAs)) protein is Chaperone protein HtpG.